The following is a 491-amino-acid chain: Stage IV sporulation protein A (491 aa).

The Walker A motif; involved in ATP-binding signature appears at 23 to 30 (GPVRTGKS). 23–30 (GPVRTGKS) provides a ligand contact to ATP. Positions 334 to 362 (QLLSLITRLSKVKNEYDKIESALIDAKIK) form a coiled coil.

As to quaternary structure, interacts (via Walker A motif) with SipL (via C-terminus LysM domain).

Its subcellular location is the cytoplasm. It catalyses the reaction ATP + H2O = ADP + phosphate + H(+). In terms of biological role, ATPase. Has a role at an early stage in the morphogenesis of the spore coat and is required for proper coat localization to the forespore. This Clostridioides difficile (strain 630) (Peptoclostridium difficile) protein is Stage IV sporulation protein A.